We begin with the raw amino-acid sequence, 192 residues long: Signal peptidase complex catalytic subunit sec11 (192 aa).

Over M1–Q18 the chain is Cytoplasmic. Residues V19–F39 traverse the membrane as a helical; Signal-anchor for type II membrane protein segment. The Lumenal portion of the chain corresponds to T40–Q192. Active-site charge relay system residues include S53, H92, and D133. Positions V177 to L188 are C-terminal short (CTS) helix.

The protein belongs to the peptidase S26B family. In terms of assembly, component of the signal peptidase complex (SPC) composed of a catalytic subunit SEC11 and three accessory subunits SPC1, SPC2 and SPC3. The complex induces a local thinning of the ER membrane which is used to measure the length of the signal peptide (SP) h-region of protein substrates. This ensures the selectivity of the complex towards h-regions shorter than 18-20 amino acids. SPC associates with the translocon complex.

It localises to the endoplasmic reticulum membrane. It catalyses the reaction Cleavage of hydrophobic, N-terminal signal or leader sequences from secreted and periplasmic proteins.. In terms of biological role, catalytic component of the signal peptidase complex (SPC) which catalyzes the cleavage of N-terminal signal sequences from nascent proteins as they are translocated into the lumen of the endoplasmic reticulum. Specifically cleaves N-terminal signal peptides that contain a hydrophobic alpha-helix (h-region) shorter than 18-20 amino acids. In Aspergillus clavatus (strain ATCC 1007 / CBS 513.65 / DSM 816 / NCTC 3887 / NRRL 1 / QM 1276 / 107), this protein is Signal peptidase complex catalytic subunit sec11 (sec11).